The chain runs to 24 residues: Chaperonin GroEL (24 aa).

The protein belongs to the chaperonin (HSP60) family. Forms a cylinder of 14 subunits composed of two heptameric rings stacked back-to-back. Interacts with the co-chaperonin GroES.

The protein localises to the cytoplasm. It carries out the reaction ATP + H2O + a folded polypeptide = ADP + phosphate + an unfolded polypeptide.. Together with its co-chaperonin GroES, plays an essential role in assisting protein folding. The GroEL-GroES system forms a nano-cage that allows encapsulation of the non-native substrate proteins and provides a physical environment optimized to promote and accelerate protein folding. The protein is Chaperonin GroEL of Acinetobacter calcoaceticus.